We begin with the raw amino-acid sequence, 239 residues long: Claudin-14 (239 aa).

Topologically, residues 1–7 (MASTAVQ) are cytoplasmic. The helical transmembrane segment at 8-28 (LLGFLLSFLGMVGTLITTILP) threads the bilayer. The Extracellular segment spans residues 29 to 81 (HWRRTAHVGTNILTAVSYLKGLWMECVWHSTGIYQCQIYRSLLALPRDLQAAR). A helical membrane pass occupies residues 82–102 (ALMVISCLLSGMACACAVVGM). The Cytoplasmic segment spans residues 103 to 115 (KCTRCAKGTPAKT). A helical membrane pass occupies residues 116–136 (TFAVLGGALFLLAGLLCMVAV). The Extracellular portion of the chain corresponds to 137–162 (SWTTNDVVQNFYNPLLPSGMKFEIGQ). A helical transmembrane segment spans residues 163-183 (ALYLGFISSSLSLIGGTLLCL). The Cytoplasmic segment spans residues 184–239 (SCQDEAPYRPYPPQSRAGATTTATAPAYRPPAAYKDNRAPSVTSAAHSGYRLNDYV).

It belongs to the claudin family. As to expression, expressed in all sensory epithelia of the inner ear vestibular organs, as well as in liver and kidney.

The protein localises to the cell junction. Its subcellular location is the tight junction. It is found in the cell membrane. Functionally, plays a major role in tight junction-specific obliteration of the intercellular space, through calcium-independent cell-adhesion activity. The polypeptide is Claudin-14 (Cldn14) (Mus musculus (Mouse)).